Reading from the N-terminus, the 102-residue chain is Death-associated protein 1 (102 aa).

Residues M1–K102 form a disordered region. S2 bears the N-acetylserine mark. The residue at position 3 (S3) is a Phosphoserine; by MTOR. K29 carries the N6-acetyllysine modification. Residues H32–D43 are compositionally biased toward basic and acidic residues. S49 carries the phosphoserine modification. S51 carries the phosphoserine; by MTOR modification. S91 is modified (phosphoserine). Positions P92–K102 are enriched in polar residues.

It belongs to the DAP-DAPL1 family. As to quaternary structure, associates with ribosomes; inhibiting translation. Interacts with eiF5a (EIF5A and EIF5A2); inhibiting translation. Phosphorylated. Phosphorylation by MTOR inhibits the suppressive activity of DAP toward autophagy.

In terms of biological role, ribosome-binding protein involved in ribosome hibernation, a process during which ribosomes are stabilized in an inactive state and preserved from proteasomal degradation. Acts via its association with eiF5a (EIF5A and EIF5A2) at the polypeptide exit tunnel of the ribosome, preventing mRNA translation. Involved in ribosome hibernation in the mature oocyte by preventing mRNA translation, leading to ribosome inactivation. Ribosomes, which are produced in large quantities during oogenesis, are stored and translationally repressed in the oocyte and early embryo. Also acts as a negative regulator of autophagy. Involved in mediating interferon-gamma-induced cell death. In Homo sapiens (Human), this protein is Death-associated protein 1.